Reading from the N-terminus, the 164-residue chain is uncharacterized protein (164 aa).

Residues 107-136 (QSESGGSGSNSRSSSDTTEPTDPPAPVRKT) are disordered.

This is an uncharacterized protein from Escherichia coli (Bacteriophage T4).